The sequence spans 182 residues: ATP synthase subunit delta, mitochondrial (182 aa).

The N-terminal 17 residues, 1-17 (MFRTFGRRLVSCTLPLL), are a transit peptide targeting the mitochondrion.

Belongs to the ATPase epsilon chain family. As to quaternary structure, F-type ATPases have 2 components, F(1) - the catalytic core - and F(o) - the membrane proton channel. F(1) has five subunits: alpha(3), beta(3), gamma(1), delta(1), epsilon(1), plus the additional subunit P18 (Tb427.05.1710) that is not present in F(1)F(o) ATP synthase from metazoa. Subunit P18 (Tb927.5.1710) interacts with the alpha subunit with a 1:1 stoichiometry; the interaction is direct. Subunit gamma is part of the central stalk. F(o) has three main subunits: a, b and c. The trypanosomal ATPase complex contains additional subunits that are not present in the F(1)F(o) ATP synthase from metazoa.

It localises to the mitochondrion. The protein localises to the mitochondrion inner membrane. Functionally, mitochondrial membrane ATP synthase (F(1)F(o) ATP synthase) produces ATP from ADP in the presence of a proton gradient across the membrane which is generated by electron transport complexes of the respiratory chain. F-type ATPases consist of two structural domains, F(1) - containing the extramembraneous catalytic core, and F(o) - containing the membrane proton channel, linked together by a central stalk and a peripheral stalk. During catalysis, ATP synthesis in the catalytic domain of F(1) is coupled via a rotary mechanism of the central stalk subunits to proton translocation. Subunits alpha and beta form the catalytic core in F(1). Rotation of the central stalk against the surrounding alpha(3)beta(3) subunits leads to hydrolysis of ATP in three separate catalytic sites on the beta subunits. Contrary to the procyclic, insect form that requires F(1)F(o) ATP synthase for ATP synthesis, the bloodstream form relies on ATP hydrolysis by F(1)F(o) ATP synthase to maintain its mitochondrial membrane potential. The sequence is that of ATP synthase subunit delta, mitochondrial from Trypanosoma brucei brucei.